A 397-amino-acid chain; its full sequence is Mannan endo-1,4-beta-mannosidase 1 (397 aa).

A signal peptide spans 1-23 (MSYARRSCICGLFLLFLALVCEA). Positions 83 and 198 each coordinate substrate. The Proton donor role is filled by Glu199. Residue Tyr276 participates in substrate binding. Residue Glu316 is the Nucleophile of the active site. Position 354 (Trp354) interacts with substrate.

The protein belongs to the glycosyl hydrolase 5 (cellulase A) family.

It localises to the secreted. The catalysed reaction is Random hydrolysis of (1-&gt;4)-beta-D-mannosidic linkages in mannans, galactomannans and glucomannans.. The chain is Mannan endo-1,4-beta-mannosidase 1 (MAN1) from Solanum lycopersicum (Tomato).